Here is a 267-residue protein sequence, read N- to C-terminus: Chorismate mutase (267 aa).

Positions 7-262 (LSDASKALDL…EVEYLMQRLK (256 aa)) constitute a Chorismate mutase domain. Residues Arg77, Arg78, Asn145, Gly147, Ser148, and Thr151 each contribute to the L-tyrosine site. L-tryptophan contacts are provided by Asn145, Gly147, and Ser148.

In terms of assembly, homodimer.

It is found in the cytoplasm. The catalysed reaction is chorismate = prephenate. The protein operates within metabolic intermediate biosynthesis; prephenate biosynthesis; prephenate from chorismate: step 1/1. Its activity is regulated as follows. Each dimer has two allosteric binding sites that can bind the regulatory effectors tryptophan or tyrosine. Can bind either one tryptophan or one tyrosine, two tryptophan or two tyrosine or one tryptophan and one tyrosine, which differentially affect the catalytic activity. Activated by tryptophan and subject to feedback inhibition by tyrosine. In the presence of both tryptophan and tyrosine, the enzyme is in the activated state. Catalyzes the Claisen rearrangement of chorismate to prephenate. Acts at the first branch point in the aromatic amino acid pathway where it steers biosynthesis towards phenylalanine and tyrosine, and away from tryptophan. The chain is Chorismate mutase from Emericella nidulans (strain FGSC A4 / ATCC 38163 / CBS 112.46 / NRRL 194 / M139) (Aspergillus nidulans).